The sequence spans 253 residues: NAD(P)H-quinone oxidoreductase subunit K (253 aa).

The [4Fe-4S] cluster site is built by cysteine 68, cysteine 69, cysteine 133, and cysteine 164.

It belongs to the complex I 20 kDa subunit family. In terms of assembly, NDH-1 can be composed of about 15 different subunits; different subcomplexes with different compositions have been identified which probably have different functions. The cofactor is [4Fe-4S] cluster.

It is found in the cellular thylakoid membrane. It catalyses the reaction a plastoquinone + NADH + (n+1) H(+)(in) = a plastoquinol + NAD(+) + n H(+)(out). It carries out the reaction a plastoquinone + NADPH + (n+1) H(+)(in) = a plastoquinol + NADP(+) + n H(+)(out). Functionally, NDH-1 shuttles electrons from an unknown electron donor, via FMN and iron-sulfur (Fe-S) centers, to quinones in the respiratory and/or the photosynthetic chain. The immediate electron acceptor for the enzyme in this species is believed to be plastoquinone. Couples the redox reaction to proton translocation, and thus conserves the redox energy in a proton gradient. Cyanobacterial NDH-1 also plays a role in inorganic carbon-concentration. This chain is NAD(P)H-quinone oxidoreductase subunit K, found in Synechococcus sp. (strain CC9311).